A 78-amino-acid chain; its full sequence is MDVKSTEYLQFVKVKWPGKKTYDIEVLNKDGSLTLGYIKWWGPWWTYTFHTISNIVLDPKCLNTITSYINQLMEERKQ.

This is an uncharacterized protein from Mycoplasma (Bacteriophage L2).